Consider the following 92-residue polypeptide: Acylphosphatase (92 aa).

The Acylphosphatase-like domain maps to 5–92 (RVHIIVSGLV…TSCREFRILT (88 aa)). Residues arginine 20 and asparagine 38 contribute to the active site.

This sequence belongs to the acylphosphatase family.

The catalysed reaction is an acyl phosphate + H2O = a carboxylate + phosphate + H(+). This is Acylphosphatase (acyP) from Chlorobaculum tepidum (strain ATCC 49652 / DSM 12025 / NBRC 103806 / TLS) (Chlorobium tepidum).